The sequence spans 152 residues: Large ribosomal subunit protein bL9 (152 aa).

It belongs to the bacterial ribosomal protein bL9 family.

Binds to the 23S rRNA. This is Large ribosomal subunit protein bL9 from Chlorobaculum tepidum (strain ATCC 49652 / DSM 12025 / NBRC 103806 / TLS) (Chlorobium tepidum).